Reading from the N-terminus, the 140-residue chain is Large ribosomal subunit protein uL14 (140 aa).

This sequence belongs to the universal ribosomal protein uL14 family.

This chain is Large ribosomal subunit protein uL14 (rpl-23), found in Caenorhabditis elegans.